The primary structure comprises 309 residues: Probable lipid kinase YegS-like (309 aa).

One can recognise a DAGKc domain in the interval 1–134 (MTTPRWRLIL…IDLLRVDADG (134 aa)). Residues Thr-39, 65-71 (GDGTLSA), and Thr-96 each bind ATP. 3 residues coordinate Mg(2+): Leu-219, Asp-222, and Leu-224. Glu-280 acts as the Proton acceptor in catalysis.

It belongs to the diacylglycerol/lipid kinase family. YegS lipid kinase subfamily. Mg(2+) is required as a cofactor. It depends on Ca(2+) as a cofactor.

The protein resides in the cytoplasm. Functionally, probably phosphorylates lipids; the in vivo substrate is unknown. The protein is Probable lipid kinase YegS-like of Stenotrophomonas maltophilia (strain K279a).